Consider the following 551-residue polypeptide: Putative ABC transporter ATP-binding protein BA_3364/GBAA_3364/BAS3118 (551 aa).

ABC transporter domains are found at residues Ala5 to Phe243 and Leu293 to Arg525. Residues Gly39–Thr46 and Gly327–Ser334 each bind ATP.

Belongs to the ABC transporter superfamily.

It is found in the cell membrane. In terms of biological role, probably part of an ABC transporter complex. Responsible for energy coupling to the transport system. In Bacillus anthracis, this protein is Putative ABC transporter ATP-binding protein BA_3364/GBAA_3364/BAS3118.